We begin with the raw amino-acid sequence, 297 residues long: Pyridoxal 5'-phosphate synthase subunit SNZ1 (297 aa).

Asp23 serves as a coordination point for D-ribose 5-phosphate. The active-site Schiff-base intermediate with D-ribose 5-phosphate is the Lys80. Gly152 is a D-ribose 5-phosphate binding site. Arg164 is a binding site for D-glyceraldehyde 3-phosphate. D-ribose 5-phosphate-binding positions include Gly214 and Gly235–Ser236.

Belongs to the PdxS/SNZ family. Homohexamer. Interacts with AIM18.

The catalysed reaction is aldehydo-D-ribose 5-phosphate + D-glyceraldehyde 3-phosphate + L-glutamine = pyridoxal 5'-phosphate + L-glutamate + phosphate + 3 H2O + H(+). The protein operates within cofactor biosynthesis; pyridoxal 5'-phosphate biosynthesis. Its function is as follows. Catalyzes the formation of pyridoxal 5'-phosphate from ribose 5-phosphate (RBP), glyceraldehyde 3-phosphate (G3P) and ammonia. The ammonia is provided by a SNO isoform. Can also use ribulose 5-phosphate and dihydroxyacetone phosphate as substrates, resulting from enzyme-catalyzed isomerization of RBP and G3P, respectively. The sequence is that of Pyridoxal 5'-phosphate synthase subunit SNZ1 (SNZ1) from Saccharomyces cerevisiae (strain ATCC 204508 / S288c) (Baker's yeast).